The chain runs to 507 residues: Histidine ammonia-lyase (507 aa).

Residues 141–143 (ASG) constitute a cross-link (5-imidazolinone (Ala-Gly)). Ser-142 carries the post-translational modification 2,3-didehydroalanine (Ser).

This sequence belongs to the PAL/histidase family. Contains an active site 4-methylidene-imidazol-5-one (MIO), which is formed autocatalytically by cyclization and dehydration of residues Ala-Ser-Gly.

The protein localises to the cytoplasm. The enzyme catalyses L-histidine = trans-urocanate + NH4(+). It participates in amino-acid degradation; L-histidine degradation into L-glutamate; N-formimidoyl-L-glutamate from L-histidine: step 1/3. The protein is Histidine ammonia-lyase of Paraburkholderia phytofirmans (strain DSM 17436 / LMG 22146 / PsJN) (Burkholderia phytofirmans).